The sequence spans 143 residues: Ribonuclease P protein component (143 aa).

The disordered stretch occupies residues 111–143 (RVKRKGGGPGGNRRSAPPGSAPLTDDGRLRGEP).

It belongs to the RnpA family. As to quaternary structure, consists of a catalytic RNA component (M1 or rnpB) and a protein subunit.

The catalysed reaction is Endonucleolytic cleavage of RNA, removing 5'-extranucleotides from tRNA precursor.. Functionally, RNaseP catalyzes the removal of the 5'-leader sequence from pre-tRNA to produce the mature 5'-terminus. It can also cleave other RNA substrates such as 4.5S RNA. The protein component plays an auxiliary but essential role in vivo by binding to the 5'-leader sequence and broadening the substrate specificity of the ribozyme. This chain is Ribonuclease P protein component, found in Deinococcus geothermalis (strain DSM 11300 / CIP 105573 / AG-3a).